The primary structure comprises 438 residues: Gamma-glutamyl phosphate reductase (438 aa).

This sequence belongs to the gamma-glutamyl phosphate reductase family.

The protein resides in the cytoplasm. The enzyme catalyses L-glutamate 5-semialdehyde + phosphate + NADP(+) = L-glutamyl 5-phosphate + NADPH + H(+). Its pathway is amino-acid biosynthesis; L-proline biosynthesis; L-glutamate 5-semialdehyde from L-glutamate: step 2/2. Its function is as follows. Catalyzes the NADPH-dependent reduction of L-glutamate 5-phosphate into L-glutamate 5-semialdehyde and phosphate. The product spontaneously undergoes cyclization to form 1-pyrroline-5-carboxylate. This chain is Gamma-glutamyl phosphate reductase, found in Prochlorococcus marinus (strain NATL2A).